The sequence spans 177 residues: uncharacterized protein (177 aa).

It to Synechocystis PCC 6803 slr1290 and sll0925.

This is an uncharacterized protein from Synechocystis sp. (strain ATCC 27184 / PCC 6803 / Kazusa).